Consider the following 210-residue polypeptide: Thymidylate kinase (210 aa).

14 to 21 (GLDRSGKS) contributes to the ATP binding site.

The protein belongs to the thymidylate kinase family.

The catalysed reaction is dTMP + ATP = dTDP + ADP. It participates in pyrimidine metabolism; dTTP biosynthesis. Catalyzes the conversion of dTMP to dTDP. The protein is Thymidylate kinase (tmp1) of Schizosaccharomyces pombe (strain 972 / ATCC 24843) (Fission yeast).